Consider the following 259-residue polypeptide: Histidinol-phosphatase (259 aa).

Mg(2+) contacts are provided by glutamate 66, aspartate 82, isoleucine 84, aspartate 85, and aspartate 207. Glutamate 66 contacts substrate. Residues 84-87 and aspartate 207 each bind substrate; that span reads IDGT.

This sequence belongs to the inositol monophosphatase superfamily. The cofactor is Mg(2+).

The catalysed reaction is L-histidinol phosphate + H2O = L-histidinol + phosphate. Its pathway is amino-acid biosynthesis; L-histidine biosynthesis; L-histidine from 5-phospho-alpha-D-ribose 1-diphosphate: step 8/9. In terms of biological role, catalyzes the dephosphorylation of histidinol-phosphate to histidinol, the direct precursor of histidine. This chain is Histidinol-phosphatase (hisN), found in Chlorobaculum parvum (strain DSM 263 / NCIMB 8327) (Chlorobium vibrioforme subsp. thiosulfatophilum).